The sequence spans 779 residues: Pre-mRNA-splicing factor cef-1 (779 aa).

HTH myb-type domains follow at residues 1–56 (MPVV…DPSI) and 57–106 (KKIE…DEAE). 2 consecutive DNA-binding regions (H-T-H motif) follow at residues 29–52 (WARVSSLLARKTPKQCKARWNEWL) and 80–102 (WRTIAPIVGRTANQCLERYQRLL). Disordered stretches follow at residues 113–192 (LGLT…ESRR), 246–284 (EYQRAHFDPKKQQVGNKRKGEEDERDGKRRKGDKDPSVQ), 424–448 (TPLRAAGAGPGATPLRVGQTPLRTP), and 497–525 (WELELPDDQQEPKTAEQLEEDAAERDRRE). A compositionally biased stretch (basic and acidic residues) spans 127-152 (SADDVRKLRPGEVDPDPETKPARPDT). A coiled-coil region spans residues 157–204 (EDEKEMLSEARARLANTQGKKAKRKARERQQEESRRLAALQKRRELKT). Basic and acidic residues-rich tracts occupy residues 246–256 (EYQRAHFDPKK) and 263–281 (RKGEEDERDGKRRKGDKDP). A coiled-coil region spans residues 653 to 772 (DEEEEQISTM…EELDALTLNG (120 aa)).

It belongs to the CEF1 family. Associated with the spliceosome.

It localises to the cytoplasm. Its subcellular location is the nucleus. Involved in pre-mRNA splicing and cell cycle control. The chain is Pre-mRNA-splicing factor cef-1 (cef-1) from Neurospora crassa (strain ATCC 24698 / 74-OR23-1A / CBS 708.71 / DSM 1257 / FGSC 987).